A 145-amino-acid chain; its full sequence is Galectin-5 (145 aa).

An N-acetylserine modification is found at Ser2. The Galectin domain occupies Phe17–Thr145. Trp77–Ser83 provides a ligand contact to a beta-D-galactoside.

As to quaternary structure, monomer. As to expression, erythrocytes.

Its function is as follows. May function in erythrocyte differentiation. In Rattus norvegicus (Rat), this protein is Galectin-5 (Lgals5).